The chain runs to 149 residues: SsrA-binding protein (149 aa).

This sequence belongs to the SmpB family.

The protein resides in the cytoplasm. Functionally, required for rescue of stalled ribosomes mediated by trans-translation. Binds to transfer-messenger RNA (tmRNA), required for stable association of tmRNA with ribosomes. tmRNA and SmpB together mimic tRNA shape, replacing the anticodon stem-loop with SmpB. tmRNA is encoded by the ssrA gene; the 2 termini fold to resemble tRNA(Ala) and it encodes a 'tag peptide', a short internal open reading frame. During trans-translation Ala-aminoacylated tmRNA acts like a tRNA, entering the A-site of stalled ribosomes, displacing the stalled mRNA. The ribosome then switches to translate the ORF on the tmRNA; the nascent peptide is terminated with the 'tag peptide' encoded by the tmRNA and targeted for degradation. The ribosome is freed to recommence translation, which seems to be the essential function of trans-translation. This is SsrA-binding protein from Anaplasma marginale (strain St. Maries).